A 297-amino-acid polypeptide reads, in one-letter code: 33 kDa chaperonin (297 aa).

Disulfide bonds link Cys233–Cys235 and Cys267–Cys270.

The protein belongs to the HSP33 family. Under oxidizing conditions two disulfide bonds are formed involving the reactive cysteines. Under reducing conditions zinc is bound to the reactive cysteines and the protein is inactive.

Its subcellular location is the cytoplasm. In terms of biological role, redox regulated molecular chaperone. Protects both thermally unfolding and oxidatively damaged proteins from irreversible aggregation. Plays an important role in the bacterial defense system toward oxidative stress. The protein is 33 kDa chaperonin of Haemophilus ducreyi (strain 35000HP / ATCC 700724).